Consider the following 336-residue polypeptide: Glyceraldehyde-3-phosphate dehydrogenase (336 aa).

NAD(+) contacts are provided by residues 12–13 (RI), Asp-34, and Arg-79. Residues 150–152 (SCT), Thr-181, 210–211 (TG), and Arg-233 each bind D-glyceraldehyde 3-phosphate. Catalysis depends on Cys-151, which acts as the Nucleophile. An NAD(+)-binding site is contributed by Asn-315.

Belongs to the glyceraldehyde-3-phosphate dehydrogenase family. As to quaternary structure, homotetramer.

It localises to the cytoplasm. It catalyses the reaction D-glyceraldehyde 3-phosphate + phosphate + NAD(+) = (2R)-3-phospho-glyceroyl phosphate + NADH + H(+). It functions in the pathway carbohydrate degradation; glycolysis; pyruvate from D-glyceraldehyde 3-phosphate: step 1/5. Functionally, involved in osmoadaptation. This is Glyceraldehyde-3-phosphate dehydrogenase (gpdA) from Emericella nidulans (strain FGSC A4 / ATCC 38163 / CBS 112.46 / NRRL 194 / M139) (Aspergillus nidulans).